Here is a 215-residue protein sequence, read N- to C-terminus: MGKGDPKKPRGKMSSYAFFVQTCREEHKKKHPDASVNFSEFSKKCSERWKTMSAKEKGKFEDMAKADKARYEREMKTYIPPKGETKKKFKDPNAPKRPPSAFFLFCSEYRPKIKGEHPGLSIGDVAKKLGEMWNNTAADDKQPYEKKAAKLKEKYEKDIAAYRAKGKPDAAKKGVVKAEKSKKKKEEEEDEEDEEDEEEEEDEEDEEEEEDDDDE.

2-10 (GKGDPKKPR) is a heparin binding site. A sufficient for interaction with HAVCR2 region spans residues 2 to 97 (GKGDPKKPRG…KFKDPNAPKR (96 aa)). Residues Lys-3, Lys-7, Lys-8, and Lys-12 each carry the N6-acetyllysine modification. The tract at residues 3-15 (KGDPKKPRGKMSS) is LPS binding (delipidated). Positions 9–79 (PRGKMSSYAF…RYEREMKTYI (71 aa)) form a DNA-binding region, HMG box 1. A Cysteine sulfonic acid (-SO3H); alternate modification is found at Cys-23. A disulfide bond links Cys-23 and Cys-45. Residues 27–43 (HKKKHPDASVNFSEFSK) carry the Nuclear localization signal (NLS) 1 motif. Residues Lys-28, Lys-29, and Lys-30 each carry the N6-acetyllysine modification. An Isoglutamyl lysine isopeptide (Lys-Gln) (interchain with Q-?) cross-link involves residue Lys-28. Ser-35 carries the post-translational modification Phosphoserine. N6-acetyllysine is present on Lys-43. Residues Lys-43 and Lys-44 each participate in an isoglutamyl lysine isopeptide (Lys-Gln) (interchain with Q-?) cross-link. At Cys-45 the chain carries Cysteine sulfonic acid (-SO3H); alternate. Lys-68 participates in a covalent cross-link: Isoglutamyl lysine isopeptide (Lys-Gln) (interchain with Q-?). The disordered stretch occupies residues 76-95 (KTYIPPKGETKKKFKDPNAP). Positions 80–96 (PPKGETKKKFKDPNAPK) are LPS binding (Lipid A). A compositionally biased stretch (basic and acidic residues) spans 83 to 94 (GETKKKFKDPNA). The segment at 89 to 108 (FKDPNAPKRPPSAFFLFCSE) is cytokine-stimulating activity. At Lys-90 the chain carries N6-acetyllysine. A DNA-binding region (HMG box 2) is located at residues 95-163 (PKRPPSAFFL…KYEKDIAAYR (69 aa)). Position 100 is a phosphoserine (Ser-100). Cysteine sulfonic acid (-SO3H) is present on Cys-106. N6-acetyllysine is present on residues Lys-127, Lys-128, Lys-141, Lys-172, Lys-173, Lys-177, and Lys-180. The interval 150–183 (KLKEKYEKDIAAYRAKGKPDAAKKGVVKAEKSKK) is binding to AGER/RAGE. The segment covering 161-179 (AYRAKGKPDAAKKGVVKAE) has biased composition (basic and acidic residues). Positions 161–215 (AYRAKGKPDAAKKGVVKAEKSKKKKEEEEDEEDEEDEEEEEDEEDEEEEEDDDDE) are disordered. The Nuclear localization signal (NLS) 2 signature appears at 178 to 184 (AEKSKKK). Lys-180 participates in a covalent cross-link: Isoglutamyl lysine isopeptide (Lys-Gln) (interchain with Q-?). Ser-181 carries the post-translational modification ADP-ribosylserine. An N6-acetyllysine mark is found at Lys-182, Lys-183, Lys-184, and Lys-185. Isoglutamyl lysine isopeptide (Lys-Gln) (interchain with Q-?) cross-links involve residues Lys-182, Lys-183, and Lys-184. Positions 187–215 (EEEDEEDEEDEEEEEDEEDEEEEEDDDDE) are enriched in acidic residues.

This sequence belongs to the HMGB family. As to quaternary structure, interacts (fully reduced HMGB1) with CXCL12; probably in a 1:2 ratio involving two molecules of CXCL12, each interacting with one HMG box of HMGB1; inhibited by glycyrrhizin. Associates with the TLR4:LY96 receptor complex. Component of the RAG complex composed of core components RAG1 and RAG2, and associated component HMGB1 or HMGB2. Interacts (in cytoplasm upon starvation) with BECN1; inhibits the interaction of BECN1 and BCL2 leading to promotion of autophagy. Interacts with KPNA1; involved in nuclear import. Interacts with AGER. Interacts with SREBF1, TLR2, TLR4, TLR9, PTPRZ1, APEX1, FEN1, POLB, TERT. Interacts with IL1B, MSH2, XPA, XPC, HNF1A, TP53. Interacts with CD24; the probable CD24:SIGLEC10 complex is proposed to inhibit HGMB1-mediated tissue damage immune response. Interacts with THBD; prevents HGMB1 interaction with ACER/RAGE and inhibits HGMB1 pro-inflammatory activity. Interacts with HAVCR2; impairs HMGB1 binding to B-DNA and likely HMGB1-mediated innate immune response. Interacts with XPO1; mediating nuclear export. Interacts with receptor RAGE/AGER. Post-translationally, phosphorylated at serine residues. Phosphorylation in both NLS regions is required for cytoplasmic translocation followed by secretion. In terms of processing, acetylated on multiple sites upon stimulation with LPS. Acetylation on lysine residues in the nuclear localization signals (NLS 1 and NLS 2) leads to cytoplasmic localization and subsequent secretion. Acetylation on Lys-3 results in preferential binding to DNA ends and impairs DNA bending activity. Reduction/oxidation of cysteine residues Cys-23, Cys-45 and Cys-106 and a possible intramolecular disulfide bond involving Cys-23 and Cys-45 give rise to different redox forms with specific functional activities in various cellular compartments: 1- fully reduced HMGB1 (HMGB1C23hC45hC106h), 2- disulfide HMGB1 (HMGB1C23-C45C106h) and 3- sulfonyl HMGB1 (HMGB1C23soC45soC106so). Post-translationally, poly-ADP-ribosylated by PARP1 when secreted following stimulation with LPS. In terms of processing, in vitro cleavage by CASP1 is liberating a HMG box 1-containing peptide which may mediate immunogenic activity; the peptide antagonizes apoptosis-induced immune tolerance. Can be proteolytically cleaved by a thrombin:thrombomodulin complex; reduces binding to heparin and pro-inflammatory activities. Forms covalent cross-links mediated by transglutaminase TGM2, between a glutamine and the epsilon-amino group of a lysine residue, forming homopolymers and heteropolymers.

It is found in the nucleus. Its subcellular location is the chromosome. The protein resides in the cytoplasm. It localises to the secreted. The protein localises to the cell membrane. It is found in the endosome. Its subcellular location is the endoplasmic reticulum-Golgi intermediate compartment. Its function is as follows. Multifunctional redox sensitive protein with various roles in different cellular compartments. In the nucleus is one of the major chromatin-associated non-histone proteins and acts as a DNA chaperone involved in replication, transcription, chromatin remodeling, V(D)J recombination, DNA repair and genome stability. Proposed to be an universal biosensor for nucleic acids. Promotes host inflammatory response to sterile and infectious signals and is involved in the coordination and integration of innate and adaptive immune responses. In the cytoplasm functions as a sensor and/or chaperone for immunogenic nucleic acids implicating the activation of TLR9-mediated immune responses, and mediates autophagy. Acts as a danger-associated molecular pattern (DAMP) molecule that amplifies immune responses during tissue injury. Released to the extracellular environment can bind DNA, nucleosomes, IL-1 beta, CXCL12, AGER isoform 2/sRAGE, lipopolysaccharide (LPS) and lipoteichoic acid (LTA), and activates cells through engagement of multiple surface receptors. In the extracellular compartment fully reduced HMGB1 (released by necrosis) acts as a chemokine, disulfide HMGB1 (actively secreted) as a cytokine, and sulfonyl HMGB1 (released from apoptotic cells) promotes immunological tolerance. Has proangiogenic activity. May be involved in platelet activation. Binds to phosphatidylserine and phosphatidylethanolamide. Bound to RAGE mediates signaling for neuronal outgrowth. May play a role in accumulation of expanded polyglutamine (polyQ) proteins. Nuclear functions are attributed to fully reduced HGMB1. Associates with chromatin and binds DNA with a preference to non-canonical DNA structures such as single-stranded DNA, DNA-containing cruciforms or bent structures, supercoiled DNA and ZDNA. Can bent DNA and enhance DNA flexibility by looping thus providing a mechanism to promote activities on various gene promoters by enhancing transcription factor binding and/or bringing distant regulatory sequences into close proximity. May be involved in nucleotide excision repair (NER), mismatch repair (MMR) and base excision repair (BER) pathways, and double strand break repair such as non-homologous end joining (NHEJ). Involved in V(D)J recombination by acting as a cofactor of the RAG complex: acts by stimulating cleavage and RAG protein binding at the 23 bp spacer of conserved recombination signal sequences (RSS). In vitro can displace histone H1 from highly bent DNA. Can restructure the canonical nucleosome leading to relaxation of structural constraints for transcription factor-binding. Enhances binding of sterol regulatory element-binding proteins (SREBPs) such as SREBF1 to their cognate DNA sequences and increases their transcriptional activities. Facilitates binding of TP53 to DNA. May be involved in mitochondrial quality control and autophagy in a transcription-dependent fashion implicating HSPB1. Can modulate the activity of the telomerase complex and may be involved in telomere maintenance. Functionally, in the cytoplasm proposed to dissociate the BECN1:BCL2 complex via competitive interaction with BECN1 leading to autophagy activation. Involved in oxidative stress-mediated autophagy. Can protect BECN1 and ATG5 from calpain-mediated cleavage and thus proposed to control their proautophagic and proapoptotic functions and to regulate the extent and severity of inflammation-associated cellular injury. In myeloid cells has a protective role against endotoxemia and bacterial infection by promoting autophagy. Involved in endosomal translocation and activation of TLR9 in response to CpG-DNA in macrophages. In terms of biological role, in the extracellular compartment (following either active secretion or passive release)involved in regulation of the inflammatory response. Fully reduced HGMB1 (which subsequently gets oxidized after release) in association with CXCL12 mediates the recruitment of inflammatory cells during the initial phase of tissue injury; the CXCL12:HMGB1 complex triggers CXCR4 homodimerization. Induces the migration of monocyte-derived immature dendritic cells and seems to regulate adhesive and migratory functions of neutrophils implicating AGER/RAGE and ITGAM. Can bind to various types of DNA and RNA including microbial unmethylated CpG-DNA to enhance the innate immune response to nucleic acids. Proposed to act in promiscuous DNA/RNA sensing which cooperates with subsequent discriminative sensing by specific pattern recognition receptors. Promotes extracellular DNA-induced AIM2 inflammasome activation implicating AGER/RAGE. Disulfide HMGB1 binds to transmembrane receptors, such as AGER/RAGE, TLR2, TLR4 and probably TREM1, thus activating their signal transduction pathways. Mediates the release of cytokines/chemokines such as TNF, IL-1, IL-6, IL-8, CCL2, CCL3, CCL4 and CXCL10. Promotes secretion of interferon-gamma by macrophage-stimulated natural killer (NK) cells in concert with other cytokines like IL-2 or IL-12. TLR4 is proposed to be the primary receptor promoting macrophage activation and signaling through TLR4 seems to implicate LY96/MD-2. In bacterial LPS- or LTA-mediated inflammatory responses binds to the endotoxins and transfers them to CD14 for signaling to the respective TLR4:LY96 and TLR2 complexes. Contributes to tumor proliferation by association with ACER/RAGE. Can bind to IL1-beta and signals through the IL1R1:IL1RAP receptor complex. Binding to class A CpG activates cytokine production in plasmacytoid dendritic cells implicating TLR9, MYD88 and AGER/RAGE and can activate autoreactive B cells. Via HMGB1-containing chromatin immune complexes may also promote B cell responses to endogenous TLR9 ligands through a B-cell receptor (BCR)-dependent and ACER/RAGE-independent mechanism. Inhibits phagocytosis of apoptotic cells by macrophages; the function is dependent on poly-ADP-ribosylation and involves binding to phosphatidylserine on the cell surface of apoptotic cells. In adaptive immunity may be involved in enhancing immunity through activation of effector T-cells and suppression of regulatory T (TReg) cells. In contrast, without implicating effector or regulatory T-cells, required for tumor infiltration and activation of T-cells expressing the lymphotoxin LTA:LTB heterotrimer thus promoting tumor malignant progression. Also reported to limit proliferation of T-cells. Released HMGB1:nucleosome complexes formed during apoptosis can signal through TLR2 to induce cytokine production. Involved in induction of immunological tolerance by apoptotic cells; its pro-inflammatory activities when released by apoptotic cells are neutralized by reactive oxygen species (ROS)-dependent oxidation specifically on Cys-106. During macrophage activation by activated lymphocyte-derived self apoptotic DNA (ALD-DNA) promotes recruitment of ALD-DNA to endosomes. This chain is High mobility group protein B1 (HMGB1), found in Bos taurus (Bovine).